Reading from the N-terminus, the 422-residue chain is Serine--tRNA ligase (422 aa).

L-serine is bound at residue 226-228 (TSE). ATP is bound by residues 257–259 (RRE) and Val273. Residue Glu280 participates in L-serine binding. An ATP-binding site is contributed by 344 to 347 (ELTS). L-serine is bound at residue Thr379.

It belongs to the class-II aminoacyl-tRNA synthetase family. Type-1 seryl-tRNA synthetase subfamily. In terms of assembly, homodimer. The tRNA molecule binds across the dimer.

Its subcellular location is the cytoplasm. It carries out the reaction tRNA(Ser) + L-serine + ATP = L-seryl-tRNA(Ser) + AMP + diphosphate + H(+). The enzyme catalyses tRNA(Sec) + L-serine + ATP = L-seryl-tRNA(Sec) + AMP + diphosphate + H(+). It participates in aminoacyl-tRNA biosynthesis; selenocysteinyl-tRNA(Sec) biosynthesis; L-seryl-tRNA(Sec) from L-serine and tRNA(Sec): step 1/1. Catalyzes the attachment of serine to tRNA(Ser). Is also able to aminoacylate tRNA(Sec) with serine, to form the misacylated tRNA L-seryl-tRNA(Sec), which will be further converted into selenocysteinyl-tRNA(Sec). This Corynebacterium glutamicum (strain ATCC 13032 / DSM 20300 / JCM 1318 / BCRC 11384 / CCUG 27702 / LMG 3730 / NBRC 12168 / NCIMB 10025 / NRRL B-2784 / 534) protein is Serine--tRNA ligase.